Reading from the N-terminus, the 260-residue chain is Cytosolic Fe-S cluster assembly factor Nubp2 homolog (260 aa).

14–21 (GKGGVGKS) contributes to the ATP binding site. The [4Fe-4S] cluster site is built by Cys-188 and Cys-191.

Belongs to the Mrp/NBP35 ATP-binding proteins family. NUBP2/CFD1 subfamily. As to quaternary structure, heterotetramer of 2 Nubp1 and 2 Nubp2 chains. It depends on [4Fe-4S] cluster as a cofactor.

The protein resides in the cytoplasm. Its function is as follows. Component of the cytosolic iron-sulfur (Fe/S) protein assembly (CIA) machinery. Required for maturation of extramitochondrial Fe-S proteins. The Nubp1-Nubp2 heterotetramer forms a Fe-S scaffold complex, mediating the de novo assembly of an Fe-S cluster and its transfer to target apoproteins. This Drosophila sechellia (Fruit fly) protein is Cytosolic Fe-S cluster assembly factor Nubp2 homolog.